Reading from the N-terminus, the 234-residue chain is Large ribosomal subunit protein uL1 (234 aa).

This sequence belongs to the universal ribosomal protein uL1 family. As to quaternary structure, part of the 50S ribosomal subunit.

In terms of biological role, binds directly to 23S rRNA. The L1 stalk is quite mobile in the ribosome, and is involved in E site tRNA release. Its function is as follows. Protein L1 is also a translational repressor protein, it controls the translation of the L11 operon by binding to its mRNA. This is Large ribosomal subunit protein uL1 from Yersinia enterocolitica serotype O:8 / biotype 1B (strain NCTC 13174 / 8081).